The sequence spans 529 residues: Serine hydroxymethyltransferase 3, chloroplastic (529 aa).

The N-terminal 60 residues, 1–60, are a transit peptide targeting the chloroplast; the sequence is MQACCGGNSMASLQQPGRVQGSVFPPIMPPVTKFSQQLKFNISKPFRSSFLKRNLVSEMR. Position 314 is an N6-(pyridoxal phosphate)lysine (Lys-314).

This sequence belongs to the SHMT family. As to quaternary structure, homotetramer. Pyridoxal 5'-phosphate serves as cofactor.

Its subcellular location is the plastid. The protein localises to the chloroplast. The catalysed reaction is (6R)-5,10-methylene-5,6,7,8-tetrahydrofolate + glycine + H2O = (6S)-5,6,7,8-tetrahydrofolate + L-serine. It functions in the pathway one-carbon metabolism; tetrahydrofolate interconversion. Inhibited by 5-CH3-H4PteGlu1/5 and 5-HCO-H4PteGlu1/5 in vitro. Its function is as follows. Catalyzes the interconversion of serine and glycine and directs the hydroxymethyl moiety of serine into the metabolic network of H4PteGlu(n)-bound one-carbon units. In Arabidopsis thaliana (Mouse-ear cress), this protein is Serine hydroxymethyltransferase 3, chloroplastic.